Consider the following 436-residue polypeptide: Adenylosuccinate synthetase (436 aa).

GTP contacts are provided by residues 12–18 and 40–42; these read GDEGKGK and GHT. Residue D13 is the Proton acceptor of the active site. Residues D13 and G40 each coordinate Mg(2+). IMP-binding positions include 13-16, 38-41, T128, R142, Q223, T238, and R302; these read DEGK and NAGH. H41 (proton donor) is an active-site residue. Residue 298–304 participates in substrate binding; sequence TTTGRRR. GTP is bound by residues R304, 330 to 332, and 412 to 414; these read KLD and SLG.

This sequence belongs to the adenylosuccinate synthetase family. In terms of assembly, homodimer. It depends on Mg(2+) as a cofactor.

It localises to the cytoplasm. The catalysed reaction is IMP + L-aspartate + GTP = N(6)-(1,2-dicarboxyethyl)-AMP + GDP + phosphate + 2 H(+). It participates in purine metabolism; AMP biosynthesis via de novo pathway; AMP from IMP: step 1/2. Functionally, plays an important role in the de novo pathway of purine nucleotide biosynthesis. Catalyzes the first committed step in the biosynthesis of AMP from IMP. The sequence is that of Adenylosuccinate synthetase from Prochlorococcus marinus (strain AS9601).